Here is a 148-residue protein sequence, read N- to C-terminus: Arginine repressor (148 aa).

It belongs to the ArgR family.

It is found in the cytoplasm. Its pathway is amino-acid biosynthesis; L-arginine biosynthesis [regulation]. Its function is as follows. Regulates arginine biosynthesis genes. The chain is Arginine repressor from Chloroherpeton thalassium (strain ATCC 35110 / GB-78).